A 1040-amino-acid polypeptide reads, in one-letter code: Multidrug resistance protein MdtB (1040 aa).

Transmembrane regions (helical) follow at residues 16–36 (FIMRPVATTLLMVAILLAGII), 347–367 (LMMAIALVVMIIYLFLRNIPA), 369–389 (IIPGVAVPLSLIGTFAVMVFL), 396–416 (LTLMALTIATGFVVDDAIVVI), 440–460 (IGFTIISLTFSLIAVLIPLLF), 472–492 (FAITLAVAILISAVVSLTLTP), 537–557 (WLTLSVALSTLLLSVLLWVFI), 863–883 (LGSTVWLIVAAVVAMYIVLGI), 888–908 (FIHPITILSTLPTAGVGALLA), 911–931 (IAGSELDVIAIIGIILLIGIV), 968–988 (ILMTTLAALLGALPLMLSTGV), and 998–1018 (IGMVGGLVVSQVLTLFTTPVI).

It belongs to the resistance-nodulation-cell division (RND) (TC 2.A.6) family. MdtB subfamily. As to quaternary structure, part of a tripartite efflux system composed of MdtA, MdtB and MdtC. MdtB forms a heteromultimer with MdtC.

It localises to the cell inner membrane. The protein is Multidrug resistance protein MdtB of Shigella boydii serotype 18 (strain CDC 3083-94 / BS512).